A 256-amino-acid polypeptide reads, in one-letter code: Major prion protein (256 aa).

The N-terminal stretch at 1–24 (MVKSHIGSWILVLFVAMWSDVGLC) is a signal peptide. Positions 25–233 (KKRPKPGGGW…ESQAYYQRGA (209 aa)) are interaction with GRB2, ERI3 and SYN1. The interval 28 to 110 (PKPGGGWNTG…QWNKPSKPKT (83 aa)) is disordered. 5 consecutive repeat copies span residues 54–62 (PQGGGGWGQ), 63–70 (PHGGGWGQ), 71–78 (PHGGGWGQ), 79–86 (PHGGGWGQ), and 87–95 (PHGGGGWGQ). Residues 54–95 (PQGGGGWGQPHGGGWGQPHGGGWGQPHGGGWGQPHGGGGWGQ) are 5 X 8 AA tandem repeats of P-H-G-G-G-W-G-Q. Gly residues predominate over residues 55–97 (QGGGGWGQPHGGGWGQPHGGGWGQPHGGGWGQPHGGGGWGQGG). Residues H64, G65, G66, H72, G73, G74, H80, G81, G82, H88, G90, and G91 each contribute to the Cu(2+) site. C182 and C217 are oxidised to a cystine. N184 and N200 each carry an N-linked (GlcNAc...) (complex) asparagine glycan. A233 carries GPI-anchor amidated alanine lipidation. The propeptide at 234–256 (SVILFSSPPVILLISFLIFLIVG) is removed in mature form.

Belongs to the prion family. As to quaternary structure, monomer and homodimer. Has a tendency to aggregate into amyloid fibrils containing a cross-beta spine, formed by a steric zipper of superposed beta-strands. Soluble oligomers may represent an intermediate stage on the path to fibril formation. Copper binding may promote oligomerization. Interacts with GRB2, APP, ERI3/PRNPIP and SYN1. Mislocalized cytosolically exposed PrP interacts with MGRN1; this interaction alters MGRN1 subcellular location and causes lysosomal enlargement. Interacts with KIAA1191.

The protein localises to the cell membrane. The protein resides in the golgi apparatus. In terms of biological role, its primary physiological function is unclear. Has cytoprotective activity against internal or environmental stresses. May play a role in neuronal development and synaptic plasticity. May be required for neuronal myelin sheath maintenance. May play a role in iron uptake and iron homeostasis. Soluble oligomers are toxic to cultured neuroblastoma cells and induce apoptosis (in vitro). Association with GPC1 (via its heparan sulfate chains) targets PRNP to lipid rafts. Also provides Cu(2+) or Zn(2+) for the ascorbate-mediated GPC1 deaminase degradation of its heparan sulfate side chains. This Ovis aries (Sheep) protein is Major prion protein (PRNP).